Consider the following 351-residue polypeptide: Adenine deaminase (351 aa).

Zn(2+)-binding residues include H19, H21, and H208. The Proton donor role is filled by E211. A Zn(2+)-binding site is contributed by D288. D289 contacts substrate.

Belongs to the metallo-dependent hydrolases superfamily. Adenosine and AMP deaminases family. Adenine deaminase type 2 subfamily. Zn(2+) serves as cofactor.

The protein localises to the cytoplasm. The protein resides in the nucleus. The enzyme catalyses adenine + H2O + H(+) = hypoxanthine + NH4(+). Catalyzes the hydrolytic deamination of adenine to hypoxanthine. Plays an important role in the purine salvage pathway and in nitrogen catabolism. This is Adenine deaminase (aah1) from Aspergillus oryzae (strain ATCC 42149 / RIB 40) (Yellow koji mold).